The following is a 110-amino-acid chain: HTH-type transcriptional regulator TnrA (110 aa).

Positions 13–81 (VISIGIVSEL…TAEILKDMRK (69 aa)) constitute an HTH merR-type domain. Residues 16–35 (IGIVSELTGLSVRQIRYYEE) constitute a DNA-binding region (H-T-H motif).

Homodimer. Under conditions of nitrogen excess, TnrA forms a stable complex with feedback-inhibited GlnA. Interacts with GlnK-AmtB complex.

Its subcellular location is the cell membrane. Under conditions of nitrogen excess, the DNA-binding activity is inhibited by the formation of a stable complex with feedback-inhibited GlnA. The presence of glutamine and AMP increases the inhibitory activity of glutamine synthetase by more than 1000-fold. Transcription regulator that actives the transcription of genes required for nitrogen assimilation such as nrgAB (ammonium transport), nasABCDEF (nitrate/nitrite assimilation), ureABC (urea degradation) and gabP (GABA transport), during nitrogen limitation. Also represses glnRA and gltAB in the absence of ammonium. On the contrary of the MerR members, which require longer DNA sites for high-affinity binding, TnrA requires a DNA sequence of 17 nucleotides as minimal binding site. The chain is HTH-type transcriptional regulator TnrA from Bacillus subtilis (strain 168).